The following is a 129-amino-acid chain: Phosphoribosyl-AMP cyclohydrolase (129 aa).

A Mg(2+)-binding site is contributed by Asp76. Residue Cys77 participates in Zn(2+) binding. Positions 78 and 80 each coordinate Mg(2+). Zn(2+) is bound by residues Cys97 and Cys104.

It belongs to the PRA-CH family. In terms of assembly, homodimer. The cofactor is Mg(2+). Zn(2+) serves as cofactor.

It is found in the cytoplasm. The catalysed reaction is 1-(5-phospho-beta-D-ribosyl)-5'-AMP + H2O = 1-(5-phospho-beta-D-ribosyl)-5-[(5-phospho-beta-D-ribosylamino)methylideneamino]imidazole-4-carboxamide. The protein operates within amino-acid biosynthesis; L-histidine biosynthesis; L-histidine from 5-phospho-alpha-D-ribose 1-diphosphate: step 3/9. Catalyzes the hydrolysis of the adenine ring of phosphoribosyl-AMP. This Polaromonas naphthalenivorans (strain CJ2) protein is Phosphoribosyl-AMP cyclohydrolase.